Consider the following 1009-residue polypeptide: MEALTLWLLPWICQCVTVRADSIIHIGAIFEENAAKDDRVFQLAVSDLSLNDDILQSEKITYSIKVIEANNPFQAVQEACDLMTQGILALVTSTGCASANALQSLTDAMHIPHLFVQRNPGGSPRTACHLNPSPDGEAYTLASRPPVRLNDVMLRLVTELRWQKFVMFYDSEYDIRGLQSFLDQASRLGLDVSLQKVDKNISHVFTSLFTTMKTEELNRYRDTLRRAILLLSPQGAHSFINEAVETNLASKDSHWVFVNEEISDPEILDLVHSALGRMTVVRQIFPSAKDNQKCMRNNHRISSLLCDPQEGYLQMLQISNLYLYDSVLMLANAFHRKLEDRKWHSMASLNCIRKSTKPWNGGRSMLDTIKKGHITGLTGVMEFREDSSNPYVQFEILGTTYSETFGKDMRKLATWDSEKGLNGSLQERPMGSRLQGLTLKVVTVLEEPFVMVAENILGQPKRYKGFSIDVLDALAKALGFKYEIYQAPDGRYGHQLHNTSWNGMIGELISKRADLAISAITITPERESVVDFSKRYMDYSVGILIKKPEEKISIFSLFAPFDFAVWACIAAAIPVVGVLIFVLNRIQAVRSQSATQPRPSASATLHSAIWIVYGAFVQQGGESSVNSVAMRIVMGSWWLFTLIVCSSYTANLAAFLTVSRMDNPIRTFQDLSKQLEMSYGTVRDSAVYEYFRAKGTNPLEQDSTFAELWRTISKNGGADNCVSNPSEGIRKAKKGNYAFLWDVAVVEYAALTDDDCSVTVIGNSISSKGYGIALQHGSPYRDLFSQRILELQDTGDLDVLKQKWWPHTGRCDLTSHSSTQTEGKSLKLHSFAGVFCILAIGLLLACLVAALELWWNSNRCHQETPKEDKEVNLEQVHRRINSLMDEDIAHKQISPASIELSALEMGGLAPSQALEPTREYQNTQLSVSTFLPEQSSHGTSRTLSSGPSSNLPLPLSSSATMPSIQCKHRSPNGGLFRQSPVKTPIPMSFQPVPGGVLPEALDTSHGTSI.

The signal sequence occupies residues 1 to 20 (MEALTLWLLPWICQCVTVRA). The tract at residues 21–436 (DSIIHIGAIF…ERPMGSRLQG (416 aa)) is interaction with CBLN1. At 21-562 (DSIIHIGAIF…SIFSLFAPFD (542 aa)) the chain is on the extracellular side. 3 cysteine pairs are disulfide-bonded: cysteine 80/cysteine 351, cysteine 96/cysteine 128, and cysteine 294/cysteine 306. 2 N-linked (GlcNAc...) asparagine glycosylation sites follow: asparagine 131 and asparagine 200. Residues asparagine 422 and asparagine 498 are each glycosylated (N-linked (GlcNAc...) asparagine). Glutamate 527, valine 530, and aspartate 531 together coordinate Ca(2+). A helical membrane pass occupies residues 563–583 (FAVWACIAAAIPVVGVLIFVL). The Cytoplasmic segment spans residues 584-637 (NRIQAVRSQSATQPRPSASATLHSAIWIVYGAFVQQGGESSVNSVAMRIVMGSW). The helical transmembrane segment at 638 to 658 (WLFTLIVCSSYTANLAAFLTV) threads the bilayer. Residues 659–830 (SRMDNPIRTF…TEGKSLKLHS (172 aa)) lie on the Extracellular side of the membrane. Ca(2+) is bound by residues aspartate 753, aspartate 755, and serine 757. Residues 831–851 (FAGVFCILAIGLLLACLVAAL) traverse the membrane as a helical segment. Residues 852–1009 (ELWWNSNRCH…ALDTSHGTSI (158 aa)) are Cytoplasmic-facing. The segment covering 931–942 (LPEQSSHGTSRT) has biased composition (polar residues). The interval 931–960 (LPEQSSHGTSRTLSSGPSSNLPLPLSSSAT) is disordered. Residues 943-958 (LSSGPSSNLPLPLSSS) show a composition bias toward low complexity.

The protein belongs to the glutamate-gated ion channel (TC 1.A.10.1) family. GRID1 subfamily. Homodimer. Interacts (via extracellular N-terminal domain) with CBLN1 (via C1q domain), and more weakly with CBLN2; the interactions mediate the trans-synaptic adhesion complexes also with neurexins and are required for ligand-gated cation channel activity. In terms of tissue distribution, equally in forebrain and cerebellum.

Its subcellular location is the postsynaptic cell membrane. The enzyme catalyses Ca(2+)(in) = Ca(2+)(out). It catalyses the reaction Na(+)(in) = Na(+)(out). Member of the ionotropic glutamate receptor family, which plays a crucial role in synaptic organization and signal transduction in the central nervous system. Although it shares structural features with ionotropic glutamate receptors, does not bind glutamate as a primary ligand. Instead, forms trans-synaptic adhesion complexes with presynaptic neurexins and cerebellins, regulating NMDA and AMPA receptor activity and influencing synaptic plasticity through signal transduction. In the presence of NRX1B-CBLN1, forms cation-selective channels that are proposed to be gated by glycine and D-serine. However, recent research disputes this ligand-gated cation channel activity. Cation-selective ion channel can be triggered by GRM1 in dopaminergic neurons. Also acts as a receptor for GABA, modulating inhibitory synaptic plasticity through non-ionotropic mechanisms. This Mus musculus (Mouse) protein is Glutamate receptor ionotropic, delta-1 (Grid1).